A 279-amino-acid polypeptide reads, in one-letter code: Probable autolysin LDP (279 aa).

Residues 1–24 form the signal peptide; sequence MKKSLTVTVSSVLAFLALNNAAHA. The LysM domain occupies 51 to 94; the sequence is TTYTVVAGDSLYKIALEHHLTLNQLYSYNPGVTPLIFPGDVISL. Residues 158 to 279 enclose the Peptidase C51 domain; that stretch reads VPTVPVAHNY…LNPGKYNYIH (122 aa).

It catalyses the reaction Hydrolyzes the link between N-acetylmuramoyl residues and L-amino acid residues in certain cell-wall glycopeptides.. In terms of biological role, has weak lytic activity toward S.aureus cells. This chain is Probable autolysin LDP, found in Staphylococcus aureus (strain NCTC 8325 / PS 47).